We begin with the raw amino-acid sequence, 1056 residues long: ISWI chromatin-remodeling complex ATPase CHR11 (1056 aa).

The span at methionine 1–alanine 10 shows a compositional bias: low complexity. Disordered stretches follow at residues methionine 1–glutamate 80 and lysine 133–asparagine 175. Composition is skewed to acidic residues over residues phenylalanine 11 to glutamate 32 and proline 60 to lysine 73. Positions serine 12–serine 105 form a coiled coil. Residues lysine 141–serine 151 show a composition bias toward basic residues. Residues glutamate 155–glycine 169 show a composition bias toward acidic residues. The 166-residue stretch at isoleucine 201–glutamate 366 folds into the Helicase ATP-binding domain. Aspartate 214–threonine 221 contributes to the ATP binding site. The DEAH box motif lies at aspartate 317–histidine 320. Positions leucine 494–alanine 645 constitute a Helicase C-terminal domain. 2 disordered regions span residues tryptophan 738–proline 774 and isoleucine 814–glutamate 833. Positions aspartate 815–glutamate 833 are enriched in acidic residues. 2 SANT domains span residues glutamate 840–lysine 892 and glutamine 941–isoleucine 1002. The interval glutamate 1011–arginine 1056 is disordered. The span at threonine 1047–arginine 1056 shows a compositional bias: basic residues.

This sequence belongs to the SNF2/RAD54 helicase family. ISWI subfamily. Interacts with RLT1 and RLT2. Interacts (via C-terminus) with RLT1 (via the DDT domain), RLT2 (via the DDT domain), PTM (via the DDT domain) and DDR4 (via the DDT domain). Binds to FGT1. Highly expressed in growing tissues such as inflorescence and flower meristems, young leaves and floral organs. Expressed in roots, rosette and cauline leaves, stems, flowers, inflorescences and siliques.

It is found in the nucleus. Its function is as follows. Possesses intrinsic ATP-dependent nucleosome-remodeling activity. Constitutes the catalytic subunit of several complexes capable of forming ordered nucleosome arrays on chromatin. Involved in the formation of nucleosome distribution patterns. Involved in nuclear proliferation during megagametogenesis and cell expansion in the sporophyte. Required for the maintenance of the plant vegetative phase. In association with RLT1 or RLT2 may prevent the early activation of the vegetative-to-reproductive transition by regulating key genes that contribute to flower timing, such as FT, SEP1, SEP3, AGL8/FUL, SOC1 and FLC. Necessary to acquire heat stress (HS) memory. The chain is ISWI chromatin-remodeling complex ATPase CHR11 from Arabidopsis thaliana (Mouse-ear cress).